The primary structure comprises 635 residues: Threonine--tRNA ligase (635 aa).

The TGS domain maps to 1 to 58 (MIHVTCNQEAFELPEGASAMDLANKMKQSHCFVGALINDQEKDLSTTLQDGDTVLFLT). The segment at 237-528 (DHRVLGTKLD…LIEHFKGRFP (292 aa)) is catalytic. Positions 328, 379, and 505 each coordinate Zn(2+).

It belongs to the class-II aminoacyl-tRNA synthetase family. Homodimer. Requires Zn(2+) as cofactor.

The protein localises to the cytoplasm. The catalysed reaction is tRNA(Thr) + L-threonine + ATP = L-threonyl-tRNA(Thr) + AMP + diphosphate + H(+). In terms of biological role, catalyzes the attachment of threonine to tRNA(Thr) in a two-step reaction: L-threonine is first activated by ATP to form Thr-AMP and then transferred to the acceptor end of tRNA(Thr). Also edits incorrectly charged L-seryl-tRNA(Thr). The protein is Threonine--tRNA ligase of Chlamydia trachomatis serovar L2b (strain UCH-1/proctitis).